The sequence spans 547 residues: Elongator complex protein 3 (547 aa).

Residues R82 to P372 form the Radical SAM core domain. [4Fe-4S] cluster is bound by residues C99, C109, and C112. The residue at position 161 (S161) is a Phosphoserine. K164 serves as a coordination point for acetyl-CoA. Residue Y202 is modified to Phosphotyrosine; by ALK. K229 is subject to N6-methyllysine. Position 251 is a phosphotyrosine (Y251). Residues I396–K547 form the N-acetyltransferase domain. Acetyl-CoA-binding positions include E474–V477, F497–M499, and Y530.

The protein belongs to the ELP3 family. Component of the elongator complex which consists of ELP1, ELP2, ELP3, ELP4, ELP5 and ELP6. ELP1, ELP2 and ELP3 form the elongator core complex. Interacts with alpha-tubulin. [4Fe-4S] cluster serves as cofactor. In terms of processing, tyrosine-phosphorylated; phosphorylation on Tyr-202 does not affect elongator complex integrity or ELP3 protein stability. Also serine/threonine-phosphorylated. As to expression, expressed in the cerebellum and spinal motor neurons.

It is found in the cytoplasm. The protein localises to the nucleus. The enzyme catalyses uridine(34) in tRNA + acetyl-CoA + S-adenosyl-L-methionine + H2O = 5-(carboxymethyl)uridine(34) in tRNA + 5'-deoxyadenosine + L-methionine + CoA + 2 H(+). It participates in tRNA modification; 5-methoxycarbonylmethyl-2-thiouridine-tRNA biosynthesis. In terms of biological role, catalytic tRNA acetyltransferase subunit of the elongator complex which is required for multiple tRNA modifications, including mcm5U (5-methoxycarbonylmethyl uridine), mcm5s2U (5-methoxycarbonylmethyl-2-thiouridine), and ncm5U (5-carbamoylmethyl uridine). In the elongator complex, acts as a tRNA uridine(34) acetyltransferase by mediating formation of carboxymethyluridine in the wobble base at position 34 in tRNAs. May also act as a protein lysine acetyltransferase by mediating acetylation of target proteins; such activity is however unclear in vivo and recent evidences suggest that ELP3 primarily acts as a tRNA acetyltransferase. Involved in neurogenesis: regulates the migration and branching of projection neurons in the developing cerebral cortex, through a process depending on alpha-tubulin acetylation. Required for acetylation of GJA1 in the developing cerebral cortex. This is Elongator complex protein 3 from Homo sapiens (Human).